The chain runs to 184 residues: ATP-dependent protease subunit HslV (184 aa).

Residue Thr12 is part of the active site. Na(+) is bound by residues Ala166, Cys169, and Thr172.

This sequence belongs to the peptidase T1B family. HslV subfamily. In terms of assembly, a double ring-shaped homohexamer of HslV is capped on each side by a ring-shaped HslU homohexamer. The assembly of the HslU/HslV complex is dependent on binding of ATP.

Its subcellular location is the cytoplasm. The enzyme catalyses ATP-dependent cleavage of peptide bonds with broad specificity.. With respect to regulation, allosterically activated by HslU binding. Functionally, protease subunit of a proteasome-like degradation complex believed to be a general protein degrading machinery. In Brucella abortus (strain S19), this protein is ATP-dependent protease subunit HslV.